The sequence spans 252 residues: Membrane protein insertase YidC (252 aa).

The N-terminal stretch at methionine 1 to glycine 20 is a signal peptide. Residue cysteine 21 is the site of N-palmitoyl cysteine attachment. The S-diacylglycerol cysteine moiety is linked to residue cysteine 21. The next 5 helical transmembrane spans lie at tyrosine 59–valine 79, leucine 129–isoleucine 149, phenylalanine 160–threonine 180, isoleucine 206–leucine 226, and leucine 228–methionine 248.

Belongs to the OXA1/ALB3/YidC family. Type 2 subfamily.

Its subcellular location is the cell membrane. Its function is as follows. Required for the insertion and/or proper folding and/or complex formation of integral membrane proteins into the membrane. Involved in integration of membrane proteins that insert both dependently and independently of the Sec translocase complex, as well as at least some lipoproteins. The polypeptide is Membrane protein insertase YidC (Oceanobacillus iheyensis (strain DSM 14371 / CIP 107618 / JCM 11309 / KCTC 3954 / HTE831)).